The primary structure comprises 467 residues: MHCVLARILLWFLIVDLSVIRALVLPPLKDYDPLEPLMKRDMAMGQRNRFKVDGQLPPILNSTDVTDDQRSLHTPGEIPSYVINHCPLVHLYSEEKYWPSDIAEYVQNFQIKDKNGNSISTHENLTLHDLKAEYHVDLFGNKTETHIPSSEVFLTSLDDFDKDPKWLLGHLPEYGTGYNSKAPAILIVVDKGNGWVDAFWFFFYPFNHGPFIMGHGPWGNHVGDWEHSLVRFYKGIPKYLWMSAHSSGTGYRYEAVEKFKKLRKRKQQDSDDGGDTILERPLIFSARGTHANYASAGQHAHDIPFFFMPLSDFTDRGPLWDPSLNFYSYTFDGKTVTPSSEREESLGLDWLHFQGGWGDQQLPARDPRQKWCVAQWKYIGGPRGPLFKKLDRLNLCGGVKKWNFWNGGCPARRLIKKAEGLDSESTDLMGDNCGVLLYRIRPKWLRGILRFLMWRGILCSLMEFFTN.

The helical transmembrane segment at 8–28 threads the bilayer; sequence ILLWFLIVDLSVIRALVLPPL. N-linked (GlcNAc...) asparagine glycans are attached at residues Asn61, Asn124, and Asn141.

The protein belongs to the VPS62 family.

It localises to the membrane. Functionally, involved in vacuolar protein sorting. This is Putative vacuolar protein sorting-associated protein TDA6 (TDA6) from Saccharomyces cerevisiae (strain ATCC 204508 / S288c) (Baker's yeast).